A 450-amino-acid chain; its full sequence is Phosphoglucosamine mutase (450 aa).

Ser103 (phosphoserine intermediate) is an active-site residue. Positions 103, 243, 245, and 247 each coordinate Mg(2+). Ser103 bears the Phosphoserine mark.

It belongs to the phosphohexose mutase family. Mg(2+) is required as a cofactor. In terms of processing, activated by phosphorylation.

It catalyses the reaction alpha-D-glucosamine 1-phosphate = D-glucosamine 6-phosphate. In terms of biological role, catalyzes the conversion of glucosamine-6-phosphate to glucosamine-1-phosphate. This chain is Phosphoglucosamine mutase, found in Lactobacillus delbrueckii subsp. bulgaricus (strain ATCC 11842 / DSM 20081 / BCRC 10696 / JCM 1002 / NBRC 13953 / NCIMB 11778 / NCTC 12712 / WDCM 00102 / Lb 14).